A 69-amino-acid polypeptide reads, in one-letter code: Cold shock-like protein CspE (69 aa).

Residues 6–66 (GNVKWFNESK…GAKGPSAANV (61 aa)) enclose the CSD domain.

The protein resides in the cytoplasm. The polypeptide is Cold shock-like protein CspE (cspE) (Escherichia coli O6:H1 (strain CFT073 / ATCC 700928 / UPEC)).